The chain runs to 309 residues: MPIRVPDELPAVNFLREENVFVMTTSRASGQEIRPLKVLILNLMPKKIETENQFLRLLSNSPLQVDIQLLRIDSRESRNTPAEHLNNFYCNFEDIQDQNFDGLIVTGAPLGLVEFNDVAYWPQIKQVLEWSKDHVTSTLFVCWAVQAALNILYGIPKQTRTEKLSGVYEHHILHPHALLTRGFDDSFLAPHSRYADFPAALIRDYTDLEILAETEEGDAYLFASKDKRIAFVTGHPEYDAQTLAQEFFRDVEAGLDPDVPYNYFPHNDPQNTPRASWRSHGNLLFTNWLNYYVYQITPYDLRHMNPTLD.

The active-site Acyl-thioester intermediate is C142. Substrate is bound by residues K163 and S192. H235 serves as the catalytic Proton acceptor. E237 is an active-site residue. R249 is a binding site for substrate.

It belongs to the MetA family. As to quaternary structure, homodimer.

Its subcellular location is the cytoplasm. It catalyses the reaction L-homoserine + succinyl-CoA = O-succinyl-L-homoserine + CoA. It participates in amino-acid biosynthesis; L-methionine biosynthesis via de novo pathway; O-succinyl-L-homoserine from L-homoserine: step 1/1. Its function is as follows. Transfers a succinyl group from succinyl-CoA to L-homoserine, forming succinyl-L-homoserine. In Escherichia coli (strain K12 / MC4100 / BW2952), this protein is Homoserine O-succinyltransferase.